The chain runs to 392 residues: Fasciculation and elongation protein zeta-1 (392 aa).

The disordered stretch occupies residues 1-37 (MEAPLVSLDEEFEDLRPSCSEDPEEKPQCFYGSSPHH). Position 58 is a phosphoserine (Ser58). The interval 175-198 (MQNSPDPEEEEEVLEEEDGGETSS) is disordered. Positions 180–194 (DPEEEEEVLEEEDGG) are enriched in acidic residues. Positions 230–298 (SELTELLDQV…KKRRKEKGLS (69 aa)) form a coiled coil. 2 positions are modified to phosphoserine: Ser298 and Ser316.

The protein belongs to the zygin family. Homodimer; disulfide-linked. May form heterodimers with FEZ2. Interacts with the NH2-terminal variable region (V1) of PKC zeta and weakly with that of PKC epsilon. Interacts with UBE4B. Interacts with SAP30L. Interacts with SCOC and ULK1; SCOC interferes with ULK1-binding to FEZ1. Directly interacts with SCOC and UVRAG. Stabilizes the interaction between SCOC and UVRAG during amino acid starvation. In terms of processing, phosphorylated by protein kinase C zeta; which enhances interaction with UBE4B and polyubiquitination. Polyubiquitinated in a UBE4B-dependent manner; which does not lead to proteasomal degradation and may be important for neurogenic activity. Polyubiquitin linkage seems to be mainly through Lys-26. As to expression, mainly expressed in brain.

The protein localises to the cytoplasm. Its subcellular location is the cytoskeleton. It localises to the microtubule organizing center. The protein resides in the centrosome. It is found in the cell membrane. Its function is as follows. May be involved in axonal outgrowth as component of the network of molecules that regulate cellular morphology and axon guidance machinery. Able to restore partial locomotion and axonal fasciculation to C.elegans unc-76 mutants in germline transformation experiments. May participate in the transport of mitochondria and other cargos along microtubules. The polypeptide is Fasciculation and elongation protein zeta-1 (FEZ1) (Homo sapiens (Human)).